Here is a 462-residue protein sequence, read N- to C-terminus: Beta-glucosidase 1A (462 aa).

3 residues coordinate substrate: Gln-20, His-123, and Asn-169. Glu-170 serves as the catalytic Proton donor. Position 301 (Tyr-301) interacts with substrate. Residue Glu-365 is the Nucleophile of the active site. Substrate-binding positions include Trp-415 and 422–423 (EW).

The protein belongs to the glycosyl hydrolase 1 family.

The enzyme catalyses Hydrolysis of terminal, non-reducing beta-D-glucosyl residues with release of beta-D-glucose.. In terms of biological role, plays an important role in cellulose degradation. Shows hydrolytic activity against several glycosidic compounds. This Phanerodontia chrysosporium (White-rot fungus) protein is Beta-glucosidase 1A.